The following is a 441-amino-acid chain: Cysteine desulfurase, mitosomal (441 aa).

Pyridoxal 5'-phosphate is bound by residues 107–108 (AT), Asn-189, Gln-217, and 237–239 (SGH). Lys-240 bears the N6-(pyridoxal phosphate)lysine mark. Thr-277 is a pyridoxal 5'-phosphate binding site. The Cysteine persulfide intermediate role is filled by Cys-367. Cys-367 is a binding site for [2Fe-2S] cluster.

The protein belongs to the class-V pyridoxal-phosphate-dependent aminotransferase family. NifS/IscS subfamily. As to quaternary structure, interacts with ISD11. The cofactor is pyridoxal 5'-phosphate.

The protein resides in the mitosome. The enzyme catalyses (sulfur carrier)-H + L-cysteine = (sulfur carrier)-SH + L-alanine. Its function is as follows. Catalyzes the removal of elemental sulfur from cysteine to produce alanine. It supplies the inorganic sulfur for iron-sulfur (Fe-S) clusters in mitosomes. In Trachipleistophora hominis (Microsporidian parasite), this protein is Cysteine desulfurase, mitosomal.